The sequence spans 552 residues: Acyl-CoA-dependent acyltransferase MAC1 (552 aa).

The protein belongs to the trichothecene O-acetyltransferase family.

It participates in secondary metabolite biosynthesis. In terms of biological role, acyl-CoA-dependent acyltransferase; part of the gene cluster that mediates the biosynthesis of mannosylerythritol lipids (MELs), surface-active substances that enhance the availability of water-insoluble substrates. Depending on the number of acetyl groups, mannosylerythritol lipids can be differentiated into MEL A (fully acetylated), MEL B and MEL C (monoacetylated at R-6 and R-4, respectively), and the fully deacetylated MEL D. The first step in the pathway is the generation of mannosylerythritol by the glycosyltransferase EMT1 which catalyzes the transfer of GDP-mannose to the C-4 atom of meso-erythritol. This reaction has to be stereospecific, since only mannosyl-D-erythritol is generated. The produced disaccharide is subsequently acylated with fatty acids of various lengths by the acyltransferases MAC1 and MAC2 at positions C-2 and C-3, repectively. The existence of MEL derivatives which carry an acetyl group at C-2 implies that at least MAC1 also accepts acetyl-CoA as a donor. The final step of MEL biosynthesis is the acetylation of the fully acylated mannosylerythritol lipids catalyzed by the acetyl-CoA-dependent acetyltransferase MAT1. MAT1 displays a relaxed regioselectivity and is able to transfer acetylgroups to both positions C-4 and C-6 of the mannosyl moiety. The chain is Acyl-CoA-dependent acyltransferase MAC1 from Pseudozyma antarctica (strain T-34) (Yeast).